A 291-amino-acid polypeptide reads, in one-letter code: MSEKLQKVLARAGHGSRREIESIIEAGRVSVDGKIAKLGDRVEVTPGLKIRIDGHLISVRESAEQICRVLAYYKPEGELCTRNDPEGRPTVFDRLPKLRGARWIAVGRLDVNTCGLLLFTTDGELANRLMHPSREVEREYAVRVFGQVDDAKLRDLSRGVQLEDGPAAFKTIKFSGGEGINQWYNVTLTEGRNREVRRLWEAVGVQVSRLIRVRYGDIPLPKGLPRGGWTELDLAQTNYLRELVELPPETSSKVAVEKDRRRMKANQIRRAVKRHSQVSGGRRSGGRNNNG.

The 73-residue stretch at 3–75 folds into the S4 RNA-binding domain; it reads EKLQKVLARA…ICRVLAYYKP (73 aa). D110 functions as the Nucleophile in the catalytic mechanism. Residues 256 to 291 form a disordered region; that stretch reads VEKDRRRMKANQIRRAVKRHSQVSGGRRSGGRNNNG.

The protein belongs to the pseudouridine synthase RsuA family.

The enzyme catalyses uridine(2605) in 23S rRNA = pseudouridine(2605) in 23S rRNA. Functionally, responsible for synthesis of pseudouridine from uracil-2605 in 23S ribosomal RNA. The protein is Ribosomal large subunit pseudouridine synthase B (rluB) of Escherichia coli (strain K12).